The primary structure comprises 221 residues: UPF0758 protein CGSHiEE_07200 (221 aa).

One can recognise an MPN domain in the interval 99–221; the sequence is IINDPETVKL…CYSFAENCLL (123 aa). Residues histidine 170, histidine 172, and aspartate 183 each contribute to the Zn(2+) site. Residues 170 to 183 carry the JAMM motif motif; it reads HNHPSGVTEPSYSD.

This sequence belongs to the UPF0758 family.

This Haemophilus influenzae (strain PittEE) protein is UPF0758 protein CGSHiEE_07200.